The primary structure comprises 57 residues: uncharacterized protein (57 aa).

In terms of biological role, proetin of unknown function whose overexpression causes growth inhibition. Overexpression increases the expression of ergosterol synthesis genes. This is an uncharacterized protein from Saccharomyces cerevisiae (strain ATCC 204508 / S288c) (Baker's yeast).